The primary structure comprises 310 residues: MLKIVFMGTPEFSVPSLEKLIENYDVRAVLTQPDKPKGRGKKLAMSEVKEVAVKNNIPVFQPVKLKNDIEVINKLKEIAPDFIVVVAFGQILSKEVLDIPKYACINLHASLLPNYRGAAPINWAIINGETKTGNTTMIMAEGLDTGDMLLKDEVDIKRDMTAGELHDILMNRGADLLVKTIDEFSKGNIKPEKQGEPETDYAAMLSKDTGKINWNDKSERIYNLIRGLNPWPLAYSSYNDKVMKIHEAKILDAAPEGEPGLITNVDNNGIEVNSSDGKILITKIQFPGKKSMNVGEYIRGNNIDKGVILK.

110-113 (SLLP) contacts (6S)-5,6,7,8-tetrahydrofolate.

The protein belongs to the Fmt family.

It catalyses the reaction L-methionyl-tRNA(fMet) + (6R)-10-formyltetrahydrofolate = N-formyl-L-methionyl-tRNA(fMet) + (6S)-5,6,7,8-tetrahydrofolate + H(+). Attaches a formyl group to the free amino group of methionyl-tRNA(fMet). The formyl group appears to play a dual role in the initiator identity of N-formylmethionyl-tRNA by promoting its recognition by IF2 and preventing the misappropriation of this tRNA by the elongation apparatus. The chain is Methionyl-tRNA formyltransferase from Clostridium acetobutylicum (strain ATCC 824 / DSM 792 / JCM 1419 / IAM 19013 / LMG 5710 / NBRC 13948 / NRRL B-527 / VKM B-1787 / 2291 / W).